A 71-amino-acid polypeptide reads, in one-letter code: Disintegrin tzabcanin (71 aa).

In terms of domain architecture, Disintegrin spans 1-71 (GEECDCGSPA…ADCPRNHFHA (71 aa)). 6 disulfide bridges follow: Cys4–Cys19, Cys6–Cys14, Cys13–Cys36, Cys27–Cys33, Cys32–Cys57, and Cys45–Cys64. Residues 49–51 (RGD) carry the Cell attachment site motif.

Belongs to the venom metalloproteinase (M12B) family. P-II subfamily. P-IIa sub-subfamily. In terms of tissue distribution, expressed by the venom gland.

The protein resides in the secreted. Functionally, inhibits fibrinogen interaction with platelets. Acts by binding to alpha-IIb/beta-3 (ITGA2B/ITGB3) on the platelet surface and inhibits aggregation induced by ADP, thrombin, platelet-activating factor and collagen. Inhibits cell adhesion to vitronectin, probably by blocking its receptor integrin alpha-V/beta-3 (ITGAV/ITGB3), and to fibronectin in vitro. Shows little to no cytotoxicity in vitro. This is Disintegrin tzabcanin from Crotalus tzabcan (Yucatan neotropical rattlesnake).